Reading from the N-terminus, the 187-residue chain is High affinity copper uptake protein 1 (187 aa).

Topologically, residues 1–65 are extracellular; sequence MRMNHMEMHH…SSLVINTPGE (65 aa). A Bis-His motif motif is present at residues 9-10; the sequence is HH. Asn-19 carries an N-linked (GlcNAc...) asparagine glycan. An O-linked (GalNAc...) threonine glycan is attached at Thr-30. A helical transmembrane segment spans residues 66-86; that stretch reads MAGAFVAVFLLAMFYEGLKIA. Over 87–129 the chain is Cytoplasmic; it reads REGLLRKSQVSIRYNSMPVPGPNGTILMETHKTVGQQMLSFPH. The residue at position 111 (Thr-111) is a Phosphothreonine. The chain crosses the membrane as a helical span at residues 130-150; the sequence is LLQTVLHIIQVVISYFLMLIF. Residues 151–153 are Extracellular-facing; that stretch reads MTY. A helical transmembrane segment spans residues 154-174; sequence NGYLCIAVAAGAGTGYFLFSW. Residues 175–187 lie on the Cytoplasmic side of the membrane; it reads KKAVVVDITEHCH. Cysteine sulfenic acid (-SOH) is present on Cys-186.

It belongs to the copper transporter (Ctr) (TC 1.A.56) family. SLC31A subfamily. In terms of assembly, homotrimer; is stabilized by cisplatin via interactions between cisplatin and the methionine-rich clusters, and could be crucial for the copper(2+) reduction process and copper(1+) stabilization. Heterotrimer between SLC31A1, CCS and SOD1; this heterotrimer is copper(1+)-mediated and its maintenance is regulated through SOD1 activation. Interacts with KDR; this interaction is induced upon VEGFA stimulation leading to SLC31A1 and KDR subsequent co-internalization to early endosomes, thereby activating KDR downstream signaling in endothelial cells. Interacts (via C-terminal domain) with ATOX1 (via dimer form); this interaction improves ATOX1 stability and controls intracellular copper(1+) levels. Interacts with SLC31A2; this interaction stabilizes SLC31A2 and protects its from ubiquitination and degradation. Interacts (via C-terminal domain) with CCS; this interaction is copper(1+)-mediated. In terms of processing, O-Glycosylation at Thr-30 protects from proteolytic cleavage in the N-terminal extracellular domain. Proteolytic cleavage, leading to a truncated form, is facilitated by SLC31A2 and initiated preferentially by CTSL and to a minor extend by CTSB in endolysosomal compartments. A post-CTSL/cathepsin L processing occurs to yield to the fully truncated form. Post-translationally, sulfenylated at Cys-186 after stimulation with VEGFA, which induces SLC31A1-KDR disulfide bond formation and their co-internalization to early endosomes, driving to a sustained VEGFR2 signaling.

It is found in the cell membrane. The protein localises to the early endosome membrane. The protein resides in the recycling endosome membrane. Its subcellular location is the apical cell membrane. It localises to the late endosome membrane. It is found in the basolateral cell membrane. It carries out the reaction Cu(+)(out) = Cu(+)(in). The catalysed reaction is Ag(+)(out) = Ag(+)(in). Copper uptake is inhibited by cold temperature, silver and zinc ions. Platinum-containing chemotherapeutic agents uptake is inhibited by cold temperature and copper. In terms of biological role, uniporter that mediates the transport of copper(1+) from the extracellular space to the cytoplasm, across the plasma membrane. Then, delivers directly copper(1+) to specific chaperone such as ATOX1, via a copper(1+)- mediated transient interaction between the C-terminal domain and a copper(1+) chaperone, thus controlling intracellular copper(1+) levels. May function in copper(1+) import from the apical membrane thus may drive intestinal copper absorption. The copper(1+) transport mechanism is sodium-independent, saturable and of high-affinity. Also mediates the uptake of silver(1+). May function in the influx of the platinum-containing chemotherapeutic agents. The platinum-containing chemotherapeutic agents uptake is saturable. Also participates in the first step of copper(2+) acquisition by cells through a direct transfer of copper(2+) from copper(2+) carriers in blood, such as ALB to the N-terminal domain of SLC31A1, leading to copper(2+) reduction and probably followed by copper(1+) stabilization. In addition, functions as a redox sensor to promote angiogenesis in endothelial cells, in a copper(1+) transport independent manner, by transmitting the VEGF-induced ROS signal through a sulfenylation at Cys-189 leading to a subsequent disulfide bond formation between SLC31A1 and KDR. The SLC31A1-KDR complex is then co-internalized to early endosomes, driving a sustained VEGFR2 signaling. Mobilizes copper(1+) out of the endosomal compartment, making copper(1+) available for export out of the cells. The chain is High affinity copper uptake protein 1 from Rattus norvegicus (Rat).